A 152-amino-acid chain; its full sequence is Ribosome maturation factor RimP (152 aa).

This sequence belongs to the RimP family.

It is found in the cytoplasm. Its function is as follows. Required for maturation of 30S ribosomal subunits. The protein is Ribosome maturation factor RimP of Photorhabdus laumondii subsp. laumondii (strain DSM 15139 / CIP 105565 / TT01) (Photorhabdus luminescens subsp. laumondii).